We begin with the raw amino-acid sequence, 359 residues long: Oplophorus-luciferin 2-monooxygenase non-catalytic subunit (359 aa).

An N-terminal signal peptide occupies residues 1–39 (MAVNFKFSLLTITIVVNILVYCNASAIKFDVDLEKVPSN). 8 LRR repeats span residues 135 to 158 (AATLEKLVLLKNDLSSFPFEEMSQ), 160 to 180 (TKLNWLELSVNSITGWPALSS), 181 to 203 (DTLANLILFRNPIGNIPVDAFQT), 228 to 251 (SPKLQKLVLGYNGLTSLPVGAIKL), 255 to 278 (GPTTSNLGITNNQIISFPEGAVEG), 280 to 300 (QGILGIDFNRVTSLSEEVWRP), 302 to 325 (LENLFQFSLLNNPLACVCDVMWLI), and 331 to 356 (LAKIKGNPRCAGGKRLKNLDPAVFHA).

Heterotetramer of a catalytic 19 kDa and a non-catalytic 35 kDa subunit.

Its subcellular location is the secreted. Non-catalytic subunit of oplophorus-luciferin 2-monooxygenase. May stabilize the active conformation of the catalytic subunit. This chain is Oplophorus-luciferin 2-monooxygenase non-catalytic subunit, found in Oplophorus gracilirostris (Luminous shrimp).